Here is a 130-residue protein sequence, read N- to C-terminus: Small ribosomal subunit protein uS11c (130 aa).

The protein belongs to the universal ribosomal protein uS11 family. Part of the 30S ribosomal subunit.

It is found in the plastid. Its subcellular location is the chloroplast. This Adiantum capillus-veneris (Maidenhair fern) protein is Small ribosomal subunit protein uS11c.